Consider the following 723-residue polypeptide: Transmembrane channel-like protein 7 (723 aa).

Disordered stretches follow at residues 1 to 28 (MSES…LSLD) and 51 to 71 (RRRT…KPTD). At 1 to 168 (MSESSGSALQ…GIQSYFSFLR (168 aa)) the chain is on the extracellular side. Asn-24 is a glycosylation site (N-linked (GlcNAc...) asparagine). An N-linked (GlcNAc...) asparagine glycan is attached at Asn-84. A Phosphoserine modification is found at Ser-89. N-linked (GlcNAc...) asparagine glycosylation is present at Asn-96. The helical transmembrane segment at 169 to 189 (FLVLLNLVIFLIIFMLVLLPV) threads the bilayer. Topologically, residues 190-219 (LLTKYKITNSSFVLIPFKDMDKQCTVYPVS) are cytoplasmic. The chain crosses the membrane as a helical span at residues 220–240 (SSGLIYFYSYIIDLLSGTGFL). Residues 241–263 (EETSLFYGHYTIDGVKFQNFTYD) are Extracellular-facing. The N-linked (GlcNAc...) asparagine glycan is linked to Asn-259. A helical membrane pass occupies residues 264-284 (LPLAYLLSTIASLALSLLWIV). Topologically, residues 285–362 (KRSVEGFKIN…EETIRIYSLR (78 aa)) are cytoplasmic. Residues 363-383 (LFLNCIVLAVLGACFYAIYVA) traverse the membrane as a helical segment. Over 384–404 (TVFSQEHMKKEIDKMVFGENL) the chain is Extracellular. The chain crosses the membrane as a helical span at residues 405–425 (FILYLPSIVITLANFITPMIF). The Cytoplasmic portion of the chain corresponds to 426–494 (AKIIRYEDYS…PCWETQVGQE (69 aa)). The helical transmembrane segment at 495–515 (MYKLMIFDFIIILAVTLFVDF) threads the bilayer. Residues 516–555 (PRKLLVTYCSSCKLIQCWGQQEFAIPDNVLGIVYGQTICW) are Extracellular-facing. Residues 556 to 576 (IGAFFSPLLPAIATLKFIIIF) traverse the membrane as a helical segment. The Cytoplasmic segment spans residues 577-601 (YVKEWSLLYTCRPSPRPFRASNSNF). Residues 602 to 622 (FFLLVLLIGLCLAIIPLTISI) form a helical membrane-spanning segment. At 623–665 (SRIPSSKACGPFTNFNTTWEVIPKTVSTFPSSLQSFIHGVTSE) the chain is on the extracellular side. N-linked (GlcNAc...) asparagine glycosylation occurs at Asn-638. The chain crosses the membrane as a helical span at residues 666–686 (AFAVPFFMIICLIMFYFIALA). Topologically, residues 687–723 (GAHKRVVIQLREQLSLESRDKCYLIQKLTEAQRDMRN) are cytoplasmic.

Belongs to the TMC family. As to quaternary structure, interacts with PIEZO2; the interaction inhibits PIEZO2-conducted mechanically activated currents.

The protein localises to the membrane. Acts as an inhibitory modulator of PIEZO2 mechanosensitive channel in dorsal root ganglion (DRG) neurons through physical interactions or interference with the interaction between PIEZO2 and the cytoskeleton. The sequence is that of Transmembrane channel-like protein 7 from Homo sapiens (Human).